Reading from the N-terminus, the 210-residue chain is Na(+)-translocating NADH-quinone reductase subunit D (210 aa).

The next 6 membrane-spanning stretches (helical) occupy residues 9–29, 42–62, 72–92, 96–116, 131–151, and 178–198; these read AVLFGPVLANNPIALQVLGIC, LIMSIALTLVTAFSSFFISTI, IIVQMTIIASLVIVVDQVLQA, ATAKELSVFIGLIITNCIVMG, FLDGIGNGLGYSVVLLTVGFI, and MGLLILPPSAFFIIGLFIWVL.

Belongs to the NqrDE/RnfAE family. As to quaternary structure, composed of six subunits; NqrA, NqrB, NqrC, NqrD, NqrE and NqrF.

The protein resides in the cell inner membrane. It carries out the reaction a ubiquinone + n Na(+)(in) + NADH + H(+) = a ubiquinol + n Na(+)(out) + NAD(+). Its function is as follows. NQR complex catalyzes the reduction of ubiquinone-1 to ubiquinol by two successive reactions, coupled with the transport of Na(+) ions from the cytoplasm to the periplasm. NqrA to NqrE are probably involved in the second step, the conversion of ubisemiquinone to ubiquinol. The sequence is that of Na(+)-translocating NADH-quinone reductase subunit D from Pseudoalteromonas translucida (strain TAC 125).